Here is a 152-residue protein sequence, read N- to C-terminus: Large ribosomal subunit protein uL13 (152 aa).

Residues 129 to 152 (EHPHEAQSPEVLDVKSMNKKNTRS) form a disordered region.

This sequence belongs to the universal ribosomal protein uL13 family. As to quaternary structure, part of the 50S ribosomal subunit.

In terms of biological role, this protein is one of the early assembly proteins of the 50S ribosomal subunit, although it is not seen to bind rRNA by itself. It is important during the early stages of 50S assembly. This is Large ribosomal subunit protein uL13 from Ruegeria sp. (strain TM1040) (Silicibacter sp.).